Here is a 547-residue protein sequence, read N- to C-terminus: Peptide chain release factor 3 (547 aa).

The region spanning 24 to 294 (DRRRNFAIIS…AFLQYAAKPE (271 aa)) is the tr-type G domain. Residues 33–40 (SHPDAGKT), 101–105 (DTPGH), and 155–158 (NKLD) each bind GTP.

The protein belongs to the TRAFAC class translation factor GTPase superfamily. Classic translation factor GTPase family. PrfC subfamily.

The protein localises to the cytoplasm. Increases the formation of ribosomal termination complexes and stimulates activities of RF-1 and RF-2. It binds guanine nucleotides and has strong preference for UGA stop codons. It may interact directly with the ribosome. The stimulation of RF-1 and RF-2 is significantly reduced by GTP and GDP, but not by GMP. The polypeptide is Peptide chain release factor 3 (prfC) (Synechocystis sp. (strain ATCC 27184 / PCC 6803 / Kazusa)).